The sequence spans 689 residues: MSEKTFLVEIGTEELPPKALRSLAESFAANFTAELDNAGLAHGTVQWFAAPRRLALKVANLAEAQPDREIEKRGPAIAQAFDAEGKPSKAAEGWARGCGITVDQAERLTTDKGEWLLYRAHVKGESTEALLPNMVATSLAKLPIPKLMRWGASDVHFVRPVHTVTLLLGDKVIPATILGIQSDRVIRGHRFMGEPEFTIDNADQYPEILRERGKVIADYEERKAKIKADAEEAARKIGGNADLSESLLEEVASLVEWPVVLTAKFEEKFLAVPSEALVYTMKGDQKYFPVYANDGKLLPNFIFVANIESKDPQQIISGNEKVVRPRLADAEFFFNTDRKKRLEDNLPRLQTVLFQQQLGTLRDKTDRIQALAGWIAEQIGADVNHATRAGLLSKCDLMTNMVFEFTDTQGVMGMHYARHDGEAEDVAVALNEQYQPRFAGDDLPSNPVACALAIADKMDTLAGIFGIGQHPKGDKDPFALRRAALGVLRIIVEKNLNLDLQTLTEEAVRLYGDKLTNANVVDDVIDFMLGRFRAWYQDEGYTVDTIQAVLARRPTRPADFDARMKAVSHFRTLDAAAALAAANKRVSNILAKSDEVLSDRVNASTLKEPEEIKLAMQVVVLRDKLEPYFAEGRYQDALVELAELREPVDAFFDKVMVMVDDKELRINRLTMLEKLRELFLRVADISLLQ.

This sequence belongs to the class-II aminoacyl-tRNA synthetase family. In terms of assembly, tetramer of two alpha and two beta subunits.

The protein localises to the cytoplasm. The enzyme catalyses tRNA(Gly) + glycine + ATP = glycyl-tRNA(Gly) + AMP + diphosphate. The polypeptide is Glycine--tRNA ligase beta subunit (Escherichia coli O17:K52:H18 (strain UMN026 / ExPEC)).